The chain runs to 93 residues: UPF0223 protein YfdD (93 aa).

It belongs to the UPF0223 family.

This Lactococcus lactis subsp. lactis (strain IL1403) (Streptococcus lactis) protein is UPF0223 protein YfdD (yfdD).